Consider the following 381-residue polypeptide: Succinyl-diaminopimelate desuccinylase (381 aa).

Histidine 68 serves as a coordination point for Zn(2+). Residue aspartate 70 is part of the active site. Zn(2+) is bound at residue aspartate 101. Glutamate 135 functions as the Proton acceptor in the catalytic mechanism. Zn(2+)-binding residues include glutamate 136, glutamate 164, and histidine 350.

Belongs to the peptidase M20A family. DapE subfamily. As to quaternary structure, homodimer. It depends on Zn(2+) as a cofactor. Co(2+) is required as a cofactor.

It carries out the reaction N-succinyl-(2S,6S)-2,6-diaminopimelate + H2O = (2S,6S)-2,6-diaminopimelate + succinate. The protein operates within amino-acid biosynthesis; L-lysine biosynthesis via DAP pathway; LL-2,6-diaminopimelate from (S)-tetrahydrodipicolinate (succinylase route): step 3/3. Functionally, catalyzes the hydrolysis of N-succinyl-L,L-diaminopimelic acid (SDAP), forming succinate and LL-2,6-diaminopimelate (DAP), an intermediate involved in the bacterial biosynthesis of lysine and meso-diaminopimelic acid, an essential component of bacterial cell walls. The sequence is that of Succinyl-diaminopimelate desuccinylase from Neisseria gonorrhoeae (strain NCCP11945).